The chain runs to 273 residues: Transposable element Tc1 transposase (273 aa).

The protein belongs to the transposase 5 family.

It is found in the nucleus. Probably essential for transposable element Tc1 transposition. The insertion of Tc1 is the main cause of spontaneous mutations. It is an endonuclease which can produce a single strand nick at the 5'-end of the transposon. In Caenorhabditis elegans, this protein is Transposable element Tc1 transposase (tc1a).